The primary structure comprises 361 residues: Peptide chain release factor 1 (361 aa).

Position 235 is an N5-methylglutamine (Gln-235). A disordered region spans residues 283–306 (RSQQATAEAMTRKLQVGSGDRSQR).

This sequence belongs to the prokaryotic/mitochondrial release factor family. In terms of processing, methylated by PrmC. Methylation increases the termination efficiency of RF1.

Its subcellular location is the cytoplasm. In terms of biological role, peptide chain release factor 1 directs the termination of translation in response to the peptide chain termination codons UAG and UAA. The sequence is that of Peptide chain release factor 1 from Xylella fastidiosa (strain M23).